Consider the following 633-residue polypeptide: Probable methyltransferase PMT15 (633 aa).

Residues 1 to 24 (MGNYRWPSKLSKLSLRAKQTNLYR) are Cytoplasmic-facing. Residues 25–45 (VILIAILCVTFYFVGVWQHSG) form a helical; Signal-anchor for type II membrane protein membrane-spanning segment. Residues 46–633 (RGISRSSISN…APAPDQSSDP (588 aa)) lie on the Lumenal side of the membrane. N-linked (GlcNAc...) asparagine glycosylation is found at Asn113 and Asn298.

This sequence belongs to the methyltransferase superfamily.

It localises to the golgi apparatus membrane. The sequence is that of Probable methyltransferase PMT15 from Arabidopsis thaliana (Mouse-ear cress).